A 460-amino-acid chain; its full sequence is Bifunctional protein GlmU (460 aa).

The pyrophosphorylase stretch occupies residues 1–229 (MTNYAIILAA…FNESLGVNDR (229 aa)). Residues 8–11 (LAAG), Lys-22, Gln-72, and 77–78 (GT) each bind UDP-N-acetyl-alpha-D-glucosamine. Asp-102 is a binding site for Mg(2+). UDP-N-acetyl-alpha-D-glucosamine-binding residues include Gly-139, Glu-154, Asn-169, and Asn-227. Residue Asn-227 participates in Mg(2+) binding. Residues 230–250 (VALATAETVMRQRITQKHMVN) are linker. Positions 251–460 (GVTFQNPETV…RLAHHPSRSK (210 aa)) are N-acetyltransferase. The UDP-N-acetyl-alpha-D-glucosamine site is built by Arg-332 and Lys-350. His-362 serves as the catalytic Proton acceptor. Positions 365 and 376 each coordinate UDP-N-acetyl-alpha-D-glucosamine. Residues Ala-379, 385–386 (NY), Ser-404, Ala-422, and Arg-439 contribute to the acetyl-CoA site.

This sequence in the N-terminal section; belongs to the N-acetylglucosamine-1-phosphate uridyltransferase family. In the C-terminal section; belongs to the transferase hexapeptide repeat family. Homotrimer. The cofactor is Mg(2+).

The protein resides in the cytoplasm. It carries out the reaction alpha-D-glucosamine 1-phosphate + acetyl-CoA = N-acetyl-alpha-D-glucosamine 1-phosphate + CoA + H(+). The catalysed reaction is N-acetyl-alpha-D-glucosamine 1-phosphate + UTP + H(+) = UDP-N-acetyl-alpha-D-glucosamine + diphosphate. Its pathway is nucleotide-sugar biosynthesis; UDP-N-acetyl-alpha-D-glucosamine biosynthesis; N-acetyl-alpha-D-glucosamine 1-phosphate from alpha-D-glucosamine 6-phosphate (route II): step 2/2. The protein operates within nucleotide-sugar biosynthesis; UDP-N-acetyl-alpha-D-glucosamine biosynthesis; UDP-N-acetyl-alpha-D-glucosamine from N-acetyl-alpha-D-glucosamine 1-phosphate: step 1/1. It participates in bacterial outer membrane biogenesis; LPS lipid A biosynthesis. Functionally, catalyzes the last two sequential reactions in the de novo biosynthetic pathway for UDP-N-acetylglucosamine (UDP-GlcNAc). The C-terminal domain catalyzes the transfer of acetyl group from acetyl coenzyme A to glucosamine-1-phosphate (GlcN-1-P) to produce N-acetylglucosamine-1-phosphate (GlcNAc-1-P), which is converted into UDP-GlcNAc by the transfer of uridine 5-monophosphate (from uridine 5-triphosphate), a reaction catalyzed by the N-terminal domain. The sequence is that of Bifunctional protein GlmU from Streptococcus pyogenes serotype M28 (strain MGAS6180).